The chain runs to 470 residues: MSTKIDETITFECETGNYHTFCPISCVSWLYQKIEDSFFLVVGTKTCGYFLQNALGVMIFAEPRYAMAELEEGDISAHLNDYEELKTLCIRIRKDRDPSVIIWIGTCTTEIIKMDLEGMAPKLEYEIGVPILVARANGLDYAFTQGEDTVLAVMAHRCPEQEFPIGESKETKTKTKLFPFPLLKEKKLVEYANHPPLVIFGSLPSNLVSQLDTELRRQFIKVSGWLPAQRYADLPSLGDGVYVCGVNPFLSRTATTLIRRKKCELIVAPFPIGPDGTRAWIERICPVFGIEAQSLEEREERIWESLKDYLDLVRGKSVFFMGDNLLEISLARFLIRCGMIVYEIGIPYMDKRYQAAELALLKDTCIRMCIPIPRIVEKPDNSNQIRRMRELQPDLAITGMAHANPLGARGIGTKWSVEFTFAQIHGFANARDVLELVTRPLRRNENLDNLDRTTLVRNNNEFYTSTPTPR.

[4Fe-4S] cluster is bound by residues Cys22, Cys47, and Cys107.

The protein belongs to the BchN/ChlN family. As to quaternary structure, protochlorophyllide reductase is composed of three subunits; ChlL, ChlN and ChlB. Forms a heterotetramer of two ChlB and two ChlN subunits. It depends on [4Fe-4S] cluster as a cofactor.

It is found in the plastid. Its subcellular location is the chloroplast. It carries out the reaction chlorophyllide a + oxidized 2[4Fe-4S]-[ferredoxin] + 2 ADP + 2 phosphate = protochlorophyllide a + reduced 2[4Fe-4S]-[ferredoxin] + 2 ATP + 2 H2O. The protein operates within porphyrin-containing compound metabolism; chlorophyll biosynthesis (light-independent). In terms of biological role, component of the dark-operative protochlorophyllide reductase (DPOR) that uses Mg-ATP and reduced ferredoxin to reduce ring D of protochlorophyllide (Pchlide) to form chlorophyllide a (Chlide). This reaction is light-independent. The NB-protein (ChlN-ChlB) is the catalytic component of the complex. The protein is Light-independent protochlorophyllide reductase subunit N of Pinus koraiensis (Korean pine).